The sequence spans 99 residues: uncharacterized protein (99 aa).

The protein belongs to the HesB/IscA family.

This is an uncharacterized protein from Staphylococcus haemolyticus (strain JCSC1435).